The chain runs to 241 residues: Uridylate kinase (241 aa).

Residue 13–16 (KVSG) coordinates ATP. G55 is a binding site for UMP. ATP contacts are provided by G56 and R60. UMP is bound by residues D75 and 136-143 (TGNPFFTT). T163, Q164, Y169, and D172 together coordinate ATP.

The protein belongs to the UMP kinase family. In terms of assembly, homohexamer.

Its subcellular location is the cytoplasm. It carries out the reaction UMP + ATP = UDP + ADP. The protein operates within pyrimidine metabolism; CTP biosynthesis via de novo pathway; UDP from UMP (UMPK route): step 1/1. Its activity is regulated as follows. Inhibited by UTP. In terms of biological role, catalyzes the reversible phosphorylation of UMP to UDP. This Parvibaculum lavamentivorans (strain DS-1 / DSM 13023 / NCIMB 13966) protein is Uridylate kinase.